Here is a 432-residue protein sequence, read N- to C-terminus: Protein trichome birefringence-like 23 (432 aa).

The chain crosses the membrane as a helical; Signal-anchor for type II membrane protein span at residues 13–35 (QNTYLIKLVAATLITCLAFRFFV). Residues 153–155 (GDS) carry the GDS motif motif. The short motif at 404-418 (DCLHWCLPGPIDHLN) is the DCXHWCLPGXXDXWN motif element.

Belongs to the PC-esterase family. TBL subfamily.

The protein resides in the membrane. In terms of biological role, may act as a bridging protein that binds pectin and other cell wall polysaccharides. Probably involved in maintaining esterification of pectins. May be involved in the specific O-acetylation of cell wall polymers. This is Protein trichome birefringence-like 23 (TBL23) from Arabidopsis thaliana (Mouse-ear cress).